The primary structure comprises 540 residues: Chaperonin GroEL (540 aa).

ATP contacts are provided by residues 29–32 (TLGP), 86–90 (DGTTT), G413, 476–478 (NAA), and D492.

The protein belongs to the chaperonin (HSP60) family. As to quaternary structure, forms a cylinder of 14 subunits composed of two heptameric rings stacked back-to-back. Interacts with the co-chaperonin GroES.

The protein localises to the cytoplasm. The enzyme catalyses ATP + H2O + a folded polypeptide = ADP + phosphate + an unfolded polypeptide.. Functionally, together with its co-chaperonin GroES, plays an essential role in assisting protein folding. The GroEL-GroES system forms a nano-cage that allows encapsulation of the non-native substrate proteins and provides a physical environment optimized to promote and accelerate protein folding. The sequence is that of Chaperonin GroEL from Streptococcus pneumoniae (strain P1031).